The primary structure comprises 106 residues: U1-lycotoxin-Ls1z (106 aa).

Positions 1 to 19 (MKVLVVVALLVTLISYSSS) are cleaved as a signal peptide. Residues 20–40 (EGIDDLEADELLSLMANEQTR) constitute a propeptide that is removed on maturation. Cystine bridges form between cysteine 43–cysteine 58, cysteine 50–cysteine 67, cysteine 57–cysteine 85, and cysteine 69–cysteine 83.

This sequence belongs to the neurotoxin 19 (CSTX) family. 03 subfamily. Expressed by the venom gland.

The protein localises to the secreted. This chain is U1-lycotoxin-Ls1z, found in Lycosa singoriensis (Wolf spider).